The primary structure comprises 270 residues: Tetraspanin-17 (270 aa).

Residues 1–19 (MPGKHQQFQDPEVGCCGKY) lie on the Cytoplasmic side of the membrane. A helical transmembrane segment spans residues 20–40 (FLFGFNIVFWVLGALFLAIGL). Over 41–63 (WAWGEKGVLSNISALTDLGGLDP) the chain is Extracellular. N-linked (GlcNAc...) asparagine glycosylation is present at N51. A helical membrane pass occupies residues 64 to 84 (VWLFVVVGGVMSVLGFAGCIG). Residues 85–94 (ALRENTFLLK) are Cytoplasmic-facing. A helical transmembrane segment spans residues 95-115 (FFSVFLGLIFFLELAAGILAF). The Extracellular segment spans residues 116-234 (VFKDWIRDQL…GQFEKWLQDN (119 aa)). Cystine bridges form between C155-C223, C156-C188, C172-C182, and C189-C202. N171 is a glycosylation site (N-linked (GlcNAc...) asparagine). Residues 235-255 (LIVVAGVLVGIALLQIFGLCL) traverse the membrane as a helical segment. The Cytoplasmic segment spans residues 256–270 (AQNLVSDIKAVKANW).

Belongs to the tetraspanin (TM4SF) family. As to quaternary structure, interacts with ADAM10; the interaction influences ADAM10 substrate specificity, endocytosis and turnover.

It is found in the cell membrane. Its function is as follows. Part of TspanC8 subgroup, composed of 6 members that interact with the transmembrane metalloprotease ADAM10. This interaction is required for ADAM10 exit from the endoplasmic reticulum and for enzymatic maturation and trafficking to the cell surface as well as substrate specificity. Different TspanC8/ADAM10 complexes have distinct substrates. Seems to regulate VE-cadherin expression in endothelial cells probably through interaction with ADAM10, promoting leukocyte transmigration. In Mus musculus (Mouse), this protein is Tetraspanin-17 (Tspan17).